The following is a 269-amino-acid chain: Cyclic AMP-dependent transcription factor ATF-1 (269 aa).

Positions 1-90 are disordered; that stretch reads MEDSHKSNTT…GEGENPSISA (90 aa). Residues 9 to 18 show a composition bias toward polar residues; it reads TTETASQPGS. A KID domain is found at 31–90; that stretch reads QVSSLSESEESQDSSDSIGSSQKAHGILARRPSYRKILKDLSSEDTRGRKGEGENPSISA. Residue Ser-63 is modified to Phosphoserine; by CaMK1, CDK3, RPS6KA4 and RPS6KA5. A compositionally biased stretch (basic and acidic residues) spans 67-83; that stretch reads ILKDLSSEDTRGRKGEG. The residue at position 196 (Ser-196) is a Phosphoserine; by HIPK2. A Glycyl lysine isopeptide (Lys-Gly) (interchain with G-Cter in SUMO2) cross-link involves residue Lys-206. The bZIP domain maps to 211 to 269; it reads QLRREIRLMKNREAARECRRKKKEYVKCLENRVAVLENQNKTLIEELKTLKDLYSHKSV. Positions 213-237 are basic motif; it reads RREIRLMKNREAARECRRKKKEYVK. Residues 239–260 form a leucine-zipper region; that stretch reads LENRVAVLENQNKTLIEELKTL.

It belongs to the bZIP family. ATF subfamily. In terms of assembly, binds DNA as a dimer. Interacts with HIPK2 and CDK3. Interacts with MOTS-c, a peptide produced by the mitochondrially encoded 12S rRNA MT-RNR1; the interaction occurs in the nucleus following metabolic stress. Post-translationally, phosphorylated at Ser-196 by HIPK2 in response to genotoxic stress. This phosphorylation promotes transcription repression of FTH1 and other antioxidant detoxification genes. The CDK3-mediated phosphorylation at Ser-63 promotes its transactivation and transcriptional activities. Phosphorylated at Ser-63 by RPS6KA4 and RPS6KA5 in response to mitogenic or stress stimuli.

The protein resides in the nucleus. Functionally, binds the cAMP response element (CRE) (consensus: 5'-GTGACGT[AC][AG]-3'), a sequence present in many viral and cellular promoters. Binds to the Tax-responsive element (TRE) of HTLV-I. Mediates PKA-induced stimulation of CRE-reporter genes. Represses the expression of FTH1 and other antioxidant detoxification genes. Triggers cell proliferation and transformation. The chain is Cyclic AMP-dependent transcription factor ATF-1 (Atf1) from Mus musculus (Mouse).